Reading from the N-terminus, the 315-residue chain is Homoserine O-succinyltransferase (315 aa).

C142 acts as the Acyl-thioester intermediate in catalysis. 2 residues coordinate substrate: K163 and S192. Residue H235 is the Proton acceptor of the active site. Residue E237 is part of the active site. Residue R249 participates in substrate binding. A compositionally biased stretch (basic and acidic residues) spans 249–258; sequence RDCEKSDNAP. The disordered stretch occupies residues 249 to 271; it reads RDCEKSDNAPKPENYFPDDDATK.

Belongs to the MetA family.

The protein resides in the cytoplasm. The enzyme catalyses L-homoserine + succinyl-CoA = O-succinyl-L-homoserine + CoA. Its pathway is amino-acid biosynthesis; L-methionine biosynthesis via de novo pathway; O-succinyl-L-homoserine from L-homoserine: step 1/1. Functionally, transfers a succinyl group from succinyl-CoA to L-homoserine, forming succinyl-L-homoserine. This Pseudoalteromonas translucida (strain TAC 125) protein is Homoserine O-succinyltransferase.